Here is a 194-residue protein sequence, read N- to C-terminus: Cytochrome b-245 light chain (194 aa).

The Cytoplasmic segment spans residues 2–7; the sequence is GQIEWA. A helical membrane pass occupies residues 8-30; sequence MWANEQALASGLILVAGGIVATA. Residues 31–35 lie on the Extracellular side of the membrane; sequence GRFTQ. A helical membrane pass occupies residues 36-53; sequence WYFGTYAIAAGVLVCLLE. At 54–69 the chain is on the cytoplasmic side; sequence YPRGSRAKGSTLERCG. An intramembrane segment occupies 70–80; sequence QRYLTAVLKLL. The Cytoplasmic portion of the chain corresponds to 81-86; it reads GPLSRN. The chain crosses the membrane as a helical span at residues 87-104; it reads YYFRAALHLALSVPAGFL. Leucine 105 is a topological domain (extracellular). A helical membrane pass occupies residues 106-126; sequence ATILGTVCLVIASIIYLLAAV. Over 127–194 the chain is Cytoplasmic; sequence RGEQWTPIEP…NPIPVTDEVV (68 aa). A disordered region spans residues 134–194; it reads IEPRPKERPQ…NPIPVTDEVV (61 aa). Phosphothreonine is present on threonine 147. Residue lysine 149 forms a Glycyl lysine isopeptide (Lys-Gly) (interchain with G-Cter in ubiquitin) linkage.

Belongs to the p22phox family. In terms of assembly, component of the phagocyte NADPH oxidase core complex/cytochrome b558 complex, composed of CYBB (heavy chain (beta)) and CYBA (light chain (alpha)). Component of the phagocyte NADPH oxidase complex composed of an obligatory core heterodimer formed by the membrane proteins CYBA and CYBB and the cytosolic regulatory subunits NCF1/p47-phox, NCF2/p67-phox, NCF4/p40-phox and the small GTPase RAC1 or RAC2. Interacts with NCF1 (via SH3 domain). Interacts with SH3PXD2A. Interacts with DUOX1, DUOX2 and TPO. Interacts with NOX4; this interaction mediates superoxide generation. Interacts with calprotectin (S100A8/9). Interacts with GBP7. Interacts with NOXO1. Forms a heterodimer with NOX3 and is essential for activity and cell membrane localization of NOX3. Interacts with NOX1. Phosphorylation at Thr-147 enhances NADPH oxidase activity by promoting NCF1/p47-phox binding. Post-translationally, ubiquitinated at Lys-149 likely by RNF145.

It localises to the cell membrane. Functionally, subunit of NADPH oxidase complexes that is required for the NADPH oxidase activity that generates, in various cell types, superoxide from molecular oxygen utilizing NADPH as an electron donor. Subunit of the phagocyte NADPH oxidase complex that mediates the transfer of electrons from cytosolic NADPH to O2 to produce the superoxide anion (O2(-)). In the activated complex, electrons are first transferred from NADPH to flavin adenine dinucleotide (FAD) and subsequently transferred via two heme molecules to molecular oxygen, producing superoxide through an outer-sphere reaction. Activation of the NADPH oxidase complex is initiated by the assembly of cytosolic subunits of the NADPH oxidase complex with the core NADPH oxidase complex to form a complex at the plasma membrane or phagosomal membrane. This activation process is initiated by phosphorylation dependent binding of the cytosolic NCF1/p47-phox subunit to the C-terminus of CYBA/p22-phox. Aassociates with NOX3 to form a functional NADPH oxidase constitutively generating superoxide. The polypeptide is Cytochrome b-245 light chain (Oryctolagus cuniculus (Rabbit)).